We begin with the raw amino-acid sequence, 483 residues long: Arginine/agmatine antiporter (483 aa).

The next 12 helical transmembrane spans lie at Ile11–Leu33, Leu48–Ile70, Val90–Ile112, Gly127–Leu149, Ser156–Ala178, Thr209–Gly228, Ile241–Phe263, Thr293–Tyr315, Ala335–Ser357, Ile367–Ser389, Leu415–Leu435, and Glu458–Ser477.

Belongs to the amino acid-polyamine-organocation (APC) superfamily. Basic amino acid/polyamine antiporter (APA) (TC 2.A.3.2) family.

The protein resides in the cell inner membrane. Functionally, catalyzes the exchange of L-arginine for agmatine. The arginine uptake by the bacterium in the macrophage may be a virulence factor against the host innate immune response. The sequence is that of Arginine/agmatine antiporter (aaxC) from Chlamydia trachomatis serovar L2 (strain ATCC VR-902B / DSM 19102 / 434/Bu).